A 59-amino-acid chain; its full sequence is Large ribosomal subunit protein bL32 (59 aa).

Residues Met-1–Ala-25 form a disordered region.

It belongs to the bacterial ribosomal protein bL32 family.

This chain is Large ribosomal subunit protein bL32, found in Paraburkholderia phymatum (strain DSM 17167 / CIP 108236 / LMG 21445 / STM815) (Burkholderia phymatum).